The sequence spans 819 residues: Cadherin-24 (819 aa).

A signal peptide spans M1–G19. The propeptide occupies L21–R44. Residues S45–A641 lie on the Extracellular side of the membrane. 5 consecutive Cadherin domains span residues W46 to F150, P151 to F259, P260 to F374, T375 to L517, and L517 to A630. N-linked (GlcNAc...) asparagine glycans are attached at residues N446, N548, and N563. A helical membrane pass occupies residues L642–L662. The Cytoplasmic segment spans residues R663–P819. Residues Y768 to W800 form a disordered region. Residues R771 to G784 are compositionally biased toward low complexity.

As to quaternary structure, associates with alpha-, beta- and delta-catenins.

It is found in the cell membrane. Functionally, cadherins are calcium-dependent cell adhesion proteins. They preferentially interact with themselves in a homophilic manner in connecting cells; cadherins may thus contribute to the sorting of heterogeneous cell types. Cadherin-24 mediate strong cell-cell adhesion. This is Cadherin-24 (CDH24) from Homo sapiens (Human).